The chain runs to 389 residues: Chalcone synthase 2 (389 aa).

Residue 55–62 participates in CoA binding; it reads KFQRMCDK. The active-site Acyl-thioester intermediate is the Cys-164. Residues Thr-197 and 216–217 each bind substrate; that span reads GD. Residue Ala-308 coordinates CoA.

This sequence belongs to the thiolase-like superfamily. Chalcone/stilbene synthases family. Homodimer.

The catalysed reaction is (E)-4-coumaroyl-CoA + 3 malonyl-CoA + 3 H(+) = 2',4,4',6'-tetrahydroxychalcone + 3 CO2 + 4 CoA. The protein operates within secondary metabolite biosynthesis; flavonoid biosynthesis. Its function is as follows. The primary product of this enzyme is 4,2',4',6'-tetrahydroxychalcone (also termed naringenin-chalcone or chalcone) which can under specific conditions spontaneously isomerize into naringenin. The polypeptide is Chalcone synthase 2 (CHS2) (Medicago sativa (Alfalfa)).